Consider the following 878-residue polypeptide: MKTLTSAQVRQMFLDFFKEKGHAVEPSASLVPHDDPTLLWINSGVATLKKYFDGRVVPDNPRICNAQKSIRTNDIENVGKTARHHTFFEMLGNFSIGDYFKEEAIEWAWEFLTSDEWIGFDPNLLSVTVHPEDEEAYVLWRDKIGVPEERIIRLEGNFWDIGEGPSGPNTEIFYDRGESYGHDMNDPELYPGGENERYLEVWNLVFSEFNHNPDGSYTPLPKKNIDTGMGLERMVSVIQNVPTNFDTDLFMPIIRAVETISGESYGETKEKDTAFKVIADHIRTVAFAVSDGALPSNEGRGYVLRRLLRRAVRYAKTIHIHRPFMFDLVPVVAEIMKDFYPDVQAKEEFIAKVIKNEEERFHETLNEGLAILSEVIKKERDKGSSQISGEDVFKLYDTYGFPVELTEEYAEDEHMTVDREGFQAEMEKQRERARNARQDVGSMQVQGGALGDIKVESTFVGYENLTAVAHMIELLQNGEIVSEAHEGDTVQILLDETPFYAESGGQVADKGTLKSAEVIIDIKDVKKAPNGQHVHEGVVVSGTAKKGLVVTAEVESALRKGIVKNHTATHLLHQALKDVLGSHVNQAGSLVNENRLRFDFSHFGQVTKEELSQIEKIVNEKIWEGISVAIDLKPIAEAKEMGAMALFGEKYGDIVRVVQVGDYSIELCGGCHVQNTAEIGLFKIASESGIGAGTRRIEAVTGKGAYEELNDQLGILEQAASELKSNTKDVPKRIASLQADLKEVQRENESLLAKLSQAEAGSILEKVTEIGGVKVLTEKVNAKDMNHLRTMVDDLKAKLGSAVIVLGAVQNGKVNISAGVTKDVIEKGLHAGKLVKQAAEICGGGGGGRPDMAQAGGKQPEKLEEALTSVEESVKSVL.

The Zn(2+) site is built by His-566, His-570, Cys-668, and His-672. The disordered stretch occupies residues 846–866; it reads GGGRPDMAQAGGKQPEKLEEA.

Belongs to the class-II aminoacyl-tRNA synthetase family. It depends on Zn(2+) as a cofactor.

Its subcellular location is the cytoplasm. It catalyses the reaction tRNA(Ala) + L-alanine + ATP = L-alanyl-tRNA(Ala) + AMP + diphosphate. In terms of biological role, catalyzes the attachment of alanine to tRNA(Ala) in a two-step reaction: alanine is first activated by ATP to form Ala-AMP and then transferred to the acceptor end of tRNA(Ala). Also edits incorrectly charged Ser-tRNA(Ala) and Gly-tRNA(Ala) via its editing domain. The polypeptide is Alanine--tRNA ligase (Bacillus pumilus (strain SAFR-032)).